A 430-amino-acid chain; its full sequence is GTPase Obg (430 aa).

The 158-residue stretch at M1 to L158 folds into the Obg domain. Positions R118 to P145 are disordered. Positions A159 to E329 constitute an OBG-type G domain. Residues G165–S172, F190–K194, D212–G215, N282–D285, and S310–I312 each bind GTP. Mg(2+) is bound by residues S172 and T192. In terms of domain architecture, OCT spans K352–E430.

It belongs to the TRAFAC class OBG-HflX-like GTPase superfamily. OBG GTPase family. Monomer. Mg(2+) serves as cofactor.

It localises to the cytoplasm. In terms of biological role, an essential GTPase which binds GTP, GDP and possibly (p)ppGpp with moderate affinity, with high nucleotide exchange rates and a fairly low GTP hydrolysis rate. Plays a role in control of the cell cycle, stress response, ribosome biogenesis and in those bacteria that undergo differentiation, in morphogenesis control. This is GTPase Obg from Staphylococcus epidermidis (strain ATCC 12228 / FDA PCI 1200).